A 110-amino-acid polypeptide reads, in one-letter code: Small ubiquitin-related modifier 3 (110 aa).

Residues Lys5 and Lys7 each participate in a glycyl lysine isopeptide (Lys-Gly) (interchain with G-Cter in SUMO2) cross-link. Lys11 is covalently cross-linked (Glycyl lysine isopeptide (Lys-Gly) (interchain with G-Cter in SUMO); alternate). A Glycyl lysine isopeptide (Lys-Gly) (interchain with G-Cter in SUMO2); alternate cross-link involves residue Lys11. The 78-residue stretch at 15-92 (DHINLKVAGQ…IDVFQQQTGG (78 aa)) folds into the Ubiquitin-like domain. Polar residues predominate over residues 88–101 (QQTGGSASRGSVPT). Positions 88–110 (QQTGGSASRGSVPTPNRCPDLCY) are disordered. Gly92 is covalently cross-linked (Glycyl lysine isopeptide (Gly-Lys) (interchain with K-? in acceptor proteins)). The propeptide occupies 93–110 (SASRGSVPTPNRCPDLCY).

Belongs to the ubiquitin family. SUMO subfamily. As to quaternary structure, interacts with SAE2 and UBE2I. Covalently attached to a number of proteins. Interacts with USP25 (via ts SIM domain); the interaction sumoylates USP25 and inhibits its ubiquitin hydrolyzing activity. Interacts with BMAL1. Polymeric chains can be formed through Lys-11 cross-linking. Post-translationally, cleavage of precursor form by SENP1, SENP2 or SENP5 is necessary for function.

The protein resides in the cytoplasm. Its subcellular location is the nucleus. It is found in the PML body. Its function is as follows. Ubiquitin-like protein which can be covalently attached to target lysines either as a monomer or as a lysine-linked polymer. Does not seem to be involved in protein degradation and may function as an antagonist of ubiquitin in the degradation process. Plays a role in a number of cellular processes such as nuclear transport, DNA replication and repair, mitosis and signal transduction. Covalent attachment to its substrates requires prior activation by the E1 complex SAE1-SAE2 and linkage to the E2 enzyme UBE2I, and can be promoted by an E3 ligase such as PIAS1-4, RANBP2 or CBX4. Plays a role in the regulation of sumoylation status of SETX. This Mus musculus (Mouse) protein is Small ubiquitin-related modifier 3.